Consider the following 345-residue polypeptide: Protein SHI RELATED SEQUENCE 7 (345 aa).

The interval 7–28 is disordered; sequence LGGRDHNKQDHHQEKDHNEDKS. Over residues 9–28 the composition is skewed to basic and acidic residues; the sequence is GRDHNKQDHHQEKDHNEDKS. Zn(2+) contacts are provided by Cys-119, Cys-122, Cys-130, Cys-135, Cys-139, and Cys-146. The zn(2)-C6 fungal-type; degenerate DNA-binding region spans 119–146; sequence CQDCGNQAKKDCPHMRCRTCCKSRGFDC. The interval 168-200 is disordered; that stretch reads AVLPAKRIRDANSRGGGDDDDDDKEDEKNDSCG. The Required for homo- and heterodimerization motif lies at 256-259; that stretch reads IGGH.

The protein belongs to the SHI protein family. As to expression, mainly expressed in the filaments of flowers, the shoot apex regions and pollen. Also present in leaves.

The protein resides in the nucleus. Its function is as follows. Transcription activator that binds DNA on 5'-ACTCTAC-3' and promotes auxin homeostasis-regulating gene expression (e.g. YUC genes), as well as genes affecting stamen development, cell expansion and timing of flowering. Synergistically with other SHI-related proteins, regulates gynoecium, stamen and leaf development in a dose-dependent manner, controlling apical-basal patterning. Promotes style and stigma formation, and influences vascular development during gynoecium development. May also have a role in the formation and/or maintenance of the shoot apical meristem (SAM). Regulates anther dehiscence and floral development. This is Protein SHI RELATED SEQUENCE 7 (SRS7) from Arabidopsis thaliana (Mouse-ear cress).